Reading from the N-terminus, the 205-residue chain is Large ribosomal subunit protein uL3 (205 aa).

The segment at 126–150 is disordered; that stretch reads GGPKTHGQSDRHRAPGSISSTTTPG.

The protein belongs to the universal ribosomal protein uL3 family. As to quaternary structure, part of the 50S ribosomal subunit. Forms a cluster with proteins L14 and L19.

Functionally, one of the primary rRNA binding proteins, it binds directly near the 3'-end of the 23S rRNA, where it nucleates assembly of the 50S subunit. The protein is Large ribosomal subunit protein uL3 of Dehalococcoides mccartyi (strain ATCC BAA-2266 / KCTC 15142 / 195) (Dehalococcoides ethenogenes (strain 195)).